The sequence spans 341 residues: Ribonucleoside-diphosphate reductase subunit beta (341 aa).

Fe cation-binding residues include aspartate 89, glutamate 120, and histidine 123. Residue tyrosine 127 is part of the active site. Fe cation contacts are provided by glutamate 185, glutamate 219, and histidine 222.

Belongs to the ribonucleoside diphosphate reductase small chain family. Tetramer of two alpha and two beta subunits. It depends on Fe cation as a cofactor.

The enzyme catalyses a 2'-deoxyribonucleoside 5'-diphosphate + [thioredoxin]-disulfide + H2O = a ribonucleoside 5'-diphosphate + [thioredoxin]-dithiol. Provides the precursors necessary for DNA synthesis. Catalyzes the biosynthesis of deoxyribonucleotides from the corresponding ribonucleotides. In Helicobacter pylori (strain J99 / ATCC 700824) (Campylobacter pylori J99), this protein is Ribonucleoside-diphosphate reductase subunit beta (nrdB).